A 697-amino-acid polypeptide reads, in one-letter code: Potassium channel KAT2 (697 aa).

The Cytoplasmic segment spans residues 1 to 63 (MSISCTRNFF…PFDPRFRGWE (63 aa)). Residues 64–84 (MWLVILVIYSAWICPFEFAFI) form a helical membrane-spanning segment. The Extracellular portion of the chain corresponds to 85–91 (TYKKDAL). Residues 92–112 (FIIDNIVNGFFAIDIILTFFV) form a helical membrane-spanning segment. The Cytoplasmic portion of the chain corresponds to 113-134 (AYLDSHSYLLVDKPKKIAIRYL). A helical membrane pass occupies residues 135–155 (STWFAFDVCSTAPFQSLSLLF). Topologically, residues 156–165 (KYNGSEIGFR) are extracellular. A glycan (N-linked (GlcNAc...) asparagine) is linked at N158. A helical; Voltage-sensor transmembrane segment spans residues 166–186 (VLSMLRLWRLRRVSSLFARLE). At 187-200 (KDIRFNYFWTRCTK) the chain is on the cytoplasmic side. The chain crosses the membrane as a helical span at residues 201–221 (LISVTLFAVHCAGCFAYLIAD). Residues 222-248 (QYHDPTKTWIGAVYPNFKETSVWSRYV) lie on the Extracellular side of the membrane. Positions 249 to 268 (TALYWSITTLTTTGYGDLHA) form an intramembrane region, pore-forming. The Extracellular segment spans residues 269–272 (ENPR). Residues 273-293 (EMLFFVFFMLFNLGFTSYLIG) form a helical membrane-spanning segment. At 294–697 (NMTNLVVHWT…HLYILINENS (404 aa)) the chain is on the cytoplasmic side. 377–496 (LFHGVSRNFL…RVIMNNLFMK (120 aa)) is a binding site for a nucleoside 3',5'-cyclic phosphate. The region spanning 629–697 (RVTIHLKSRD…HLYILINENS (69 aa)) is the KHA domain.

The protein belongs to the potassium channel family. Plant (TC 1.A.1.4) subfamily. The potassium channel is probably composed of a homo- or heterotetrameric complex of pore-forming subunits. May interact with KAT1. Interacts with SLAC1. Expressed in guard cells of hypocotyls, stems leaves and petioles. Detected also in the phloem of minor veins and in flower at a lower level.

The protein resides in the membrane. Highly selective inward-rectifying potassium channel. This voltage-dependent channel could mediate long-term potassium influx into guard cells leading to stomatal opening. Assuming opened or closed conformations in response to the voltage difference across the membrane, the channel is activated by hyperpolarization. The channel activity is enhanced upon external acidification. This chain is Potassium channel KAT2 (KAT2), found in Arabidopsis thaliana (Mouse-ear cress).